Consider the following 190-residue polypeptide: dTTP/UTP pyrophosphatase (190 aa).

Catalysis depends on D68, which acts as the Proton acceptor.

It belongs to the Maf family. YhdE subfamily. A divalent metal cation is required as a cofactor.

It is found in the cytoplasm. It catalyses the reaction dTTP + H2O = dTMP + diphosphate + H(+). It carries out the reaction UTP + H2O = UMP + diphosphate + H(+). Functionally, nucleoside triphosphate pyrophosphatase that hydrolyzes dTTP and UTP. May have a dual role in cell division arrest and in preventing the incorporation of modified nucleotides into cellular nucleic acids. The chain is dTTP/UTP pyrophosphatase from Pyrococcus furiosus (strain ATCC 43587 / DSM 3638 / JCM 8422 / Vc1).